A 273-amino-acid polypeptide reads, in one-letter code: Proteasome subunit beta (273 aa).

The propeptide at 1-50 (MRKDGARLALPLFDPRHDPGPDFAALVSRDAARTVPTSGDGSLGAQVPHG) is removed in mature form; by autocatalysis. Residue threonine 51 is the Nucleophile of the active site.

This sequence belongs to the peptidase T1B family. In terms of assembly, the 20S proteasome core is composed of 14 alpha and 14 beta subunits that assemble into four stacked heptameric rings, resulting in a barrel-shaped structure. The two inner rings, each composed of seven catalytic beta subunits, are sandwiched by two outer rings, each composed of seven alpha subunits. The catalytic chamber with the active sites is on the inside of the barrel. Has a gated structure, the ends of the cylinder being occluded by the N-termini of the alpha-subunits. Is capped by the proteasome-associated ATPase, ARC.

It localises to the cytoplasm. The catalysed reaction is Cleavage of peptide bonds with very broad specificity.. It participates in protein degradation; proteasomal Pup-dependent pathway. Its activity is regulated as follows. The formation of the proteasomal ATPase ARC-20S proteasome complex, likely via the docking of the C-termini of ARC into the intersubunit pockets in the alpha-rings, may trigger opening of the gate for substrate entry. Interconversion between the open-gate and close-gate conformations leads to a dynamic regulation of the 20S proteasome proteolysis activity. Its function is as follows. Component of the proteasome core, a large protease complex with broad specificity involved in protein degradation. This chain is Proteasome subunit beta, found in Acidimicrobium ferrooxidans (strain DSM 10331 / JCM 15462 / NBRC 103882 / ICP).